The primary structure comprises 311 residues: Class E basic helix-loop-helix protein 22 (311 aa).

Positions 22-170 are disordered; it reads AKRMESAFRS…GGSKKSKEQK (149 aa). The span at 81–96 shows a compositional bias: low complexity; that stretch reads GESASRSSVAESSGGE. Gly residues predominate over residues 125 to 147; the sequence is AGGGGGGGGGGGGGPGGGGGGGL. A bHLH domain is found at 171–225; sequence ALRLNINARERRRMHDLNDALDELRAVIPYAHSPSVRKLSKIATLLLAKNYILMQ.

It localises to the nucleus. Its function is as follows. May act as a transcriptional repressor. This chain is Class E basic helix-loop-helix protein 22 (BHLHE22), found in Gallus gallus (Chicken).